A 358-amino-acid polypeptide reads, in one-letter code: Trace amine-associated receptor 7b (358 aa).

At 1-47 (MATDDDRFPWDQDSILSRDLLSASSMQLCYEKLNRSCVRSPYSPGPR) the chain is on the extracellular side. The N-linked (GlcNAc...) asparagine glycan is linked to N34. Intrachain disulfides connect C37-C201 and C120-C205. A helical transmembrane segment spans residues 48-68 (LILYAVFGFGAVLAVCGNLLV). Topologically, residues 69–83 (MTSILHFRQLHSPAN) are cytoplasmic. Residues 84-104 (FLVASLACADFLVGLTVMPFS) form a helical membrane-spanning segment. The Extracellular segment spans residues 105 to 125 (MVRSVEGCWYFGDIYCKFHSS). A helical transmembrane segment spans residues 126-147 (FDGSFCYSSIFHLCFISADRYI). The Cytoplasmic segment spans residues 148 to 166 (AVSDPLIYPTRFTASVSGK). A helical transmembrane segment spans residues 167–187 (CITFSWLLSIIYSFSLFYTGV). Residues 188 to 211 (NEAGLEDLVSALTCVGGCQIAVNQ) are Extracellular-facing. N210 is a glycosylation site (N-linked (GlcNAc...) asparagine). The helical transmembrane segment at 212 to 232 (SWVFINFLLFLVPALVMMTVY) threads the bilayer. Residues 233 to 274 (SKIFLIAKQQAQNIEKMGKQTARASESYKDRVAKRERKAAKT) are Cytoplasmic-facing. A helical membrane pass occupies residues 275 to 295 (LGIAVAAFLLSWLPYFIDSII). Residues 296–309 (DAFLGFVTPTYVYE) are Extracellular-facing. Residues 310–332 (ILVWIGYYNSAMNPLIYAFFYPW) traverse the membrane as a helical segment. The Cytoplasmic segment spans residues 333–358 (FRKAIKLIVTGKILRENSSATNLFPE).

It belongs to the G-protein coupled receptor 1 family.

The protein resides in the cell membrane. Functionally, olfactory receptor specific for N,N-dimethylalkylamines trace amines, such as N,N-dimethylcyclohexylamine. Trace amine compounds are enriched in animal body fluids and act on trace amine-associated receptors (TAARs) to elicit both intraspecific and interspecific innate behaviors. Ligand-binding causes a conformation change that triggers signaling via G(s)-class of G alpha proteins (GNAL or GNAS). The sequence is that of Trace amine-associated receptor 7b from Rattus norvegicus (Rat).